Reading from the N-terminus, the 304-residue chain is Acetyl-coenzyme A carboxylase carboxyl transferase subunit beta (304 aa).

The 270-residue stretch at 25–294 folds into the CoA carboxyltransferase N-terminal domain; it reads VWTKCDSCGQ…PSVVESKADT (270 aa). Zn(2+) is bound by residues cysteine 29, cysteine 32, cysteine 48, and cysteine 51. Residues 29–51 form a C4-type zinc finger; sequence CDSCGQVLYRAELERNLEVCPKC.

Belongs to the AccD/PCCB family. In terms of assembly, acetyl-CoA carboxylase is a heterohexamer composed of biotin carboxyl carrier protein (AccB), biotin carboxylase (AccC) and two subunits each of ACCase subunit alpha (AccA) and ACCase subunit beta (AccD). Zn(2+) is required as a cofactor.

It is found in the cytoplasm. The enzyme catalyses N(6)-carboxybiotinyl-L-lysyl-[protein] + acetyl-CoA = N(6)-biotinyl-L-lysyl-[protein] + malonyl-CoA. It functions in the pathway lipid metabolism; malonyl-CoA biosynthesis; malonyl-CoA from acetyl-CoA: step 1/1. In terms of biological role, component of the acetyl coenzyme A carboxylase (ACC) complex. Biotin carboxylase (BC) catalyzes the carboxylation of biotin on its carrier protein (BCCP) and then the CO(2) group is transferred by the transcarboxylase to acetyl-CoA to form malonyl-CoA. The polypeptide is Acetyl-coenzyme A carboxylase carboxyl transferase subunit beta (Yersinia pestis bv. Antiqua (strain Nepal516)).